The following is a 168-amino-acid chain: Translationally-controlled tumor protein homolog (168 aa).

The region spanning 1–168 is the TCTP domain; sequence MLVYQDLLTG…FAYGLKEIKC (168 aa).

Belongs to the TCTP family.

Its subcellular location is the cytoplasm. Involved in calcium binding and microtubule stabilization. The protein is Translationally-controlled tumor protein homolog (TCTP) of Elaeis guineensis var. tenera (Oil palm).